The following is a 78-amino-acid chain: Large ribosomal subunit protein uL10 (78 aa).

Over residues 40-50 (AAAAAATAPAA) the composition is skewed to low complexity. The disordered stretch occupies residues 40 to 78 (AAAAAATAPAAETKKEEKKEEKKEETEESDDDIGLSLFH). Residues 51–64 (ETKKEEKKEEKKEE) show a composition bias toward basic and acidic residues.

The protein belongs to the universal ribosomal protein uL10 family. P0 forms a pentameric complex by interaction with dimers of P1 and P2.

It is found in the nucleus. The protein localises to the cytoplasm. Its function is as follows. Ribosomal protein P0 is the functional equivalent of E.coli protein L10. This chain is Large ribosomal subunit protein uL10, found in Culicoides nubeculosus (Biting midge).